We begin with the raw amino-acid sequence, 427 residues long: Imidazolonepropionase (427 aa).

Residues His-78 and His-80 each contribute to the Fe(3+) site. Zn(2+) contacts are provided by His-78 and His-80. Arg-87, Tyr-150, and His-183 together coordinate 4-imidazolone-5-propanoate. Tyr-150 provides a ligand contact to N-formimidoyl-L-glutamate. His-255 is a Fe(3+) binding site. Zn(2+) is bound at residue His-255. Position 258 (Glu-258) interacts with 4-imidazolone-5-propanoate. Residue Asp-330 participates in Fe(3+) binding. Asp-330 lines the Zn(2+) pocket. Residues Asn-332 and Gly-334 each coordinate N-formimidoyl-L-glutamate. 4-imidazolone-5-propanoate is bound at residue Thr-335.

The protein belongs to the metallo-dependent hydrolases superfamily. HutI family. Zn(2+) serves as cofactor. The cofactor is Fe(3+).

The protein resides in the cytoplasm. The enzyme catalyses 4-imidazolone-5-propanoate + H2O = N-formimidoyl-L-glutamate. It functions in the pathway amino-acid degradation; L-histidine degradation into L-glutamate; N-formimidoyl-L-glutamate from L-histidine: step 3/3. In terms of biological role, catalyzes the hydrolytic cleavage of the carbon-nitrogen bond in imidazolone-5-propanoate to yield N-formimidoyl-L-glutamate. It is the third step in the universal histidine degradation pathway. This chain is Imidazolonepropionase, found in Herpetosiphon aurantiacus (strain ATCC 23779 / DSM 785 / 114-95).